Here is a 142-residue protein sequence, read N- to C-terminus: Hydrogenase maturation factor HypA (142 aa).

Residue histidine 2 coordinates Ni(2+). Residues cysteine 73, cysteine 76, cysteine 109, and cysteine 112 each coordinate Zn(2+).

This sequence belongs to the HypA/HybF family.

In terms of biological role, involved in the maturation of [NiFe] hydrogenases. Required for nickel insertion into the metal center of the hydrogenase. This chain is Hydrogenase maturation factor HypA, found in Methanopyrus kandleri (strain AV19 / DSM 6324 / JCM 9639 / NBRC 100938).